The primary structure comprises 65 residues: Venom protein Vn4.6 (65 aa).

The first 23 residues, 1–23, serve as a signal peptide directing secretion; it reads MSKIILAIFLIVLCGLIFVTVDA.

Post-translationally, contains 2 disulfide bonds. As to expression, expressed by the venom gland.

The protein resides in the secreted. Endoparasitoid venom protein that interferes with the activation of host hemolymph prophenoloxidase. May act in conjunction with other venom proteins (such as Vn50), by competitive binding to the zymogen and thereby interrupting the enzyme. This is Venom protein Vn4.6 from Cotesia rubecula (Cabbage white butterfly parasite).